A 358-amino-acid chain; its full sequence is scyllo-inositol 2-dehydrogenase (NADP(+)) IolW (358 aa).

It belongs to the Gfo/Idh/MocA family.

It carries out the reaction scyllo-inositol + NADP(+) = scyllo-inosose + NADPH + H(+). Catalyzes the reversible NADPH-dependent reduction of scyllo-inosose (SIS) to scyllo-inositol (SI). Cannot use NADH instead of NADPH. May be involved in reduction of not only SIS but also various oxidized compounds manifested upon stressful conditions. The chain is scyllo-inositol 2-dehydrogenase (NADP(+)) IolW from Bacillus subtilis (strain 168).